The sequence spans 272 residues: Shikimate dehydrogenase (NADP(+)) (272 aa).

Residues 14–16 (SKS) and Thr61 contribute to the shikimate site. The active-site Proton acceptor is the Lys65. Position 77 (Glu77) interacts with NADP(+). Residues Asn86 and Asp102 each contribute to the shikimate site. NADP(+)-binding positions include 126-130 (GAGGA), 149-154 (NRTVFR), and Met213. Residue Tyr215 coordinates shikimate. Residue Gly237 coordinates NADP(+).

This sequence belongs to the shikimate dehydrogenase family. As to quaternary structure, homodimer.

The catalysed reaction is shikimate + NADP(+) = 3-dehydroshikimate + NADPH + H(+). The protein operates within metabolic intermediate biosynthesis; chorismate biosynthesis; chorismate from D-erythrose 4-phosphate and phosphoenolpyruvate: step 4/7. Its function is as follows. Involved in the biosynthesis of the chorismate, which leads to the biosynthesis of aromatic amino acids. Catalyzes the reversible NADPH linked reduction of 3-dehydroshikimate (DHSA) to yield shikimate (SA). This is Shikimate dehydrogenase (NADP(+)) from Escherichia coli O127:H6 (strain E2348/69 / EPEC).